The sequence spans 284 residues: Putative ABC transporter ATP-binding protein tll2439 (284 aa).

The 237-residue stretch at 6 to 242 folds into the ABC transporter domain; sequence LEFHQVGFRY…WPTFAPELGT (237 aa). 40–47 contacts ATP; sequence GLNGSGKS.

The protein belongs to the ABC transporter superfamily.

The protein resides in the cell inner membrane. Its function is as follows. Probably part of an ABC transporter complex. Responsible for energy coupling to the transport system. The protein is Putative ABC transporter ATP-binding protein tll2439 of Thermosynechococcus vestitus (strain NIES-2133 / IAM M-273 / BP-1).